The chain runs to 673 residues: UvrABC system protein B (673 aa).

In terms of domain architecture, Helicase ATP-binding spans 26 to 414 (EGLEDGLAHQ…GGDVVDQVVR (389 aa)). 39-46 (GVTGSGKT) is an ATP binding site. The short motif at 92–115 (YYDYYQPEAYVPSSDTFIEKDASV) is the Beta-hairpin element. The Helicase C-terminal domain occupies 431–597 (QVDDLLSEIR…GLNKKVVDIL (167 aa)). One can recognise a UVR domain in the interval 633-668 (QQKIHELEGLMMQHAQNLEFEEAAQIRDQLHQLREL).

Belongs to the UvrB family. Forms a heterotetramer with UvrA during the search for lesions. Interacts with UvrC in an incision complex.

The protein localises to the cytoplasm. Functionally, the UvrABC repair system catalyzes the recognition and processing of DNA lesions. A damage recognition complex composed of 2 UvrA and 2 UvrB subunits scans DNA for abnormalities. Upon binding of the UvrA(2)B(2) complex to a putative damaged site, the DNA wraps around one UvrB monomer. DNA wrap is dependent on ATP binding by UvrB and probably causes local melting of the DNA helix, facilitating insertion of UvrB beta-hairpin between the DNA strands. Then UvrB probes one DNA strand for the presence of a lesion. If a lesion is found the UvrA subunits dissociate and the UvrB-DNA preincision complex is formed. This complex is subsequently bound by UvrC and the second UvrB is released. If no lesion is found, the DNA wraps around the other UvrB subunit that will check the other stand for damage. The protein is UvrABC system protein B of Shigella flexneri.